We begin with the raw amino-acid sequence, 468 residues long: Zinc transporter SLC39A7 (468 aa).

The helical transmembrane segment at 10–30 (WVAVGLLTWAALGLLVAGHEG) threads the bilayer. Basic and acidic residues-rich tracts occupy residues 36–56 (RDVEEDFHGHSHGHSHEDFHH) and 64–100 (HTHESIWHGHAHSHDHGHSREDVHHGHSHGHSHDSLH). The tract at residues 36–116 (RDVEEDFHGH…SHGASREAGA (81 aa)) is disordered. H64 carries the post-translational modification Pros-methylhistidine. 3 helical membrane passes run 132–152 (ALGATVLISAAPFFVLFLIPV), 163–183 (LQILLSFASGGLLGDAFLHLI), and 208–228 (GPILSVGLWVLSGIVAFLVVE). Positions 237–248 (GHGHAHAHGHGH) are enriched in basic residues. Positions 237–313 (GHGHAHAHGH…NPEEEKTGSD (77 aa)) are disordered. Positions 249 to 312 (SHGDSHAHGH…QNPEEEKTGS (64 aa)) are enriched in basic and acidic residues. 3 consecutive transmembrane segments (helical) span residues 385–405 (LTAIGALAGTACALLTEGGAV), 409–429 (VAGGAGPGWVLPFTAGGFIYV), and 447–467 (SLLEVLGLLGGVAMMVLIAHL).

It belongs to the ZIP transporter (TC 2.A.5) family. KE4/Catsup subfamily. In terms of assembly, homodimer. Rapidly phosphorylated by CK2 following Zn(2+) treatment. This phosphorylation is required for efficient cytosolic Zn(2+) release.

The protein localises to the endoplasmic reticulum membrane. Its subcellular location is the golgi apparatus. The protein resides in the cis-Golgi network membrane. The enzyme catalyses Zn(2+)(in) = Zn(2+)(out). In terms of biological role, transports Zn(2+) from the endoplasmic reticulum (ER)/Golgi apparatus to the cytosol, playing an essential role in the regulation of cytosolic zinc levels. Acts as a gatekeeper of zinc release from intracellular stores, requiring post-translational activation by phosphorylation on residues, resulting in activation of multiple downstream pathways leading to cell growth and proliferation. Has an essential role in B cell development and is required for proper B cell receptor signaling. Plays an important role in maintaining intestinal epithelial homeostasis and skin dermis development by regulating ER function. Controls cell signaling pathways involved in glucose metabolism in skeletal muscle. Has a protective role against ER stress in different biological contexts. Mediates Zn(2+)-induced ferroptosis. The protein is Zinc transporter SLC39A7 of Rattus norvegicus (Rat).